The primary structure comprises 239 residues: Sugar fermentation stimulation protein homolog (239 aa).

This sequence belongs to the SfsA family.

The chain is Sugar fermentation stimulation protein homolog from Methanobrevibacter smithii (strain ATCC 35061 / DSM 861 / OCM 144 / PS).